The following is a 353-amino-acid chain: Ribosome biogenesis protein BRX1 homolog (353 aa).

Over residues 1–10 (MAATKRKRRG) the composition is skewed to basic residues. Residues 1 to 46 (MAATKRKRRGGFAVQAKKPKRNEKDAEPPAKRHATAEEVEEEERDR) are disordered. Basic and acidic residues predominate over residues 22–36 (NEKDAEPPAKRHATA). In terms of domain architecture, Brix spans 60 to 249 (ERILIFSSRG…LIKIFQGSFG (190 aa)). Lysine 160 participates in a covalent cross-link: Glycyl lysine isopeptide (Lys-Gly) (interchain with G-Cter in SUMO2). At serine 261 the chain carries Phosphoserine. An N6-acetyllysine modification is found at lysine 276. Glycyl lysine isopeptide (Lys-Gly) (interchain with G-Cter in SUMO2) cross-links involve residues lysine 314 and lysine 322.

The protein belongs to the BRX1 family.

It is found in the nucleus. The protein resides in the nucleolus. Its function is as follows. Required for biogenesis of the 60S ribosomal subunit. The protein is Ribosome biogenesis protein BRX1 homolog (BRIX1) of Pongo abelii (Sumatran orangutan).